A 791-amino-acid polypeptide reads, in one-letter code: Splicing factor 3A subunit 1 (791 aa).

A disordered region spans residues 1 to 41 (MQAGPVQAVPPPPPVATESKQPIEEEASSKEDPTPSKPVVG). A Glycyl lysine isopeptide (Lys-Gly) (interchain with G-Cter in SUMO2) cross-link involves residue Lys-20. Positions 21–34 (QPIEEEASSKEDPT) are enriched in basic and acidic residues. Residues 52–94 (IVDKTASFVARNGPEFEARIRQNEINNPKFNFLNPNDPYHAYY) form an SURP motif 1 repeat. Lys-55 carries the N6-acetyllysine modification. Lys-131 participates in a covalent cross-link: Glycyl lysine isopeptide (Lys-Gly) (interchain with G-Cter in SUMO2). The SURP motif 2 repeat unit spans residues 166–208 (VVKLTAQFVARNGRQFLTQLMQKEQRNYQFDFLRPQHSLFNYF). A disordered region spans residues 318–411 (GESEEVEMEV…APAPDEYLVS (94 aa)). Phosphoserine occurs at positions 320 and 329. Residues 320 to 336 (SEEVEMEVESDEEDQEK) show a composition bias toward acidic residues. A compositionally biased stretch (polar residues) spans 340–351 (TPSQLDQDTQVQ). Over residues 352-362 (DMDEGSDDEEE) the composition is skewed to acidic residues. Phosphoserine is present on Ser-357. The span at 366 to 382 (VPPPPETPMPPPLPPTP) shows a compositional bias: pro residues. The segment covering 386–395 (IVRKDYDPKA) has biased composition (basic and acidic residues). Residue Ser-411 is modified to Phosphoserine. Lys-422 is covalently cross-linked (Glycyl lysine isopeptide (Lys-Gly) (interchain with G-Cter in SUMO2)). Position 449 is a phosphoserine (Ser-449). Residue Tyr-454 is modified to Phosphotyrosine. Over residues 486-500 (IGEEEIQKPEEKVTW) the composition is skewed to basic and acidic residues. 3 disordered regions span residues 486 to 516 (IGEE…AAQA), 528 to 582 (HKAK…AMPP), and 664 to 684 (PMPP…KKLK). Lys-497 participates in a covalent cross-link: Glycyl lysine isopeptide (Lys-Gly) (interchain with G-Cter in SUMO2). Ser-506 bears the Phosphoserine mark. A compositionally biased stretch (polar residues) spans 507 to 516 (MARTQQAAQA). Lys-540 participates in a covalent cross-link: Glycyl lysine isopeptide (Lys-Gly) (interchain with G-Cter in SUMO2). Polar residues predominate over residues 561-570 (ATNIPSSAPP). A compositionally biased stretch (pro residues) spans 664 to 673 (PMPPVHPPPP). The tract at residues 678 to 700 (PPSKKLKTEDSLMPEEEFLRRNK) is required and sufficient for nuclear import. A Glycyl lysine isopeptide (Lys-Gly) (interchain with G-Cter in SUMO2) cross-link involves residue Lys-684. Positions 705-788 (IKVQVPNMQD…IHLALKERGG (84 aa)) constitute a Ubiquitin-like domain. Phosphotyrosine is present on Tyr-757.

As to quaternary structure, component of the 17S U2 SnRNP complex, a ribonucleoprotein complex that contains small nuclear RNA (snRNA) U2 and a number of specific proteins. Part of the SF3A subcomplex of the 17S U2 SnRNP complex which is composed of three subunits; SF3A3/SAP61, SF3A2/SAP62 and SF3A1/SAP114. SF3A associates with the splicing factor SF3B and a 12S RNA unit to form the mature 17S U2 small nuclear ribonucleoprotein complex (17S U2 snRNP). SF3A1 functions as a scaffold that interacts directly with both SF3A2 and SF3A3. Identified in the spliceosome 'E' complex, a precursor of the spliceosome 'A' complex. Identified in the spliceosome 'A' and 'B' complexes. Identified in the spliceosome 'C' complex. Interacts with P2RX6; resulting in a reduction of the splicing activity.

It localises to the nucleus. The protein resides in the nucleus speckle. In terms of biological role, component of the 17S U2 SnRNP complex of the spliceosome, a large ribonucleoprotein complex that removes introns from transcribed pre-mRNAs. The 17S U2 SnRNP complex (1) directly participates in early spliceosome assembly and (2) mediates recognition of the intron branch site during pre-mRNA splicing by promoting the selection of the pre-mRNA branch-site adenosine, the nucleophile for the first step of splicing. Within the 17S U2 SnRNP complex, SF3A1 is part of the SF3A subcomplex that contributes to the assembly of the 17S U2 snRNP, and the subsequent assembly of the pre-spliceosome 'E' complex and the pre-catalytic spliceosome 'A' complex. Involved in pre-mRNA splicing as a component of pre-catalytic spliceosome 'B' complexes. The polypeptide is Splicing factor 3A subunit 1 (Sf3a1) (Mus musculus (Mouse)).